Reading from the N-terminus, the 122-residue chain is MTLKGALSVKFDVKCPADKFFSAFVEDTNRPFEKNGKTEIEAVDLVKKTMTIQMSGSEIQKYFKTLKGSIAVTPIGVGDGSHVVWTFHFEKVHKDIDDPHSIIDESVKYFKKLDEAILNFKE.

This is an uncharacterized protein from Arabidopsis thaliana (Mouse-ear cress).